The primary structure comprises 236 residues: Alanyl-tRNA editing protein AlaX-M (236 aa).

Histidine 101, histidine 105, and histidine 205 together coordinate Zn(2+).

Belongs to the class-II aminoacyl-tRNA synthetase family. Editing domain AlaX-M subfamily. Zn(2+) serves as cofactor.

Its subcellular location is the cytoplasm. Its function is as follows. Functions in trans to edit the amino acid moiety from incorrectly charged Ser-tRNA(Ala). This chain is Alanyl-tRNA editing protein AlaX-M (alaXM), found in Saccharolobus solfataricus (strain ATCC 35092 / DSM 1617 / JCM 11322 / P2) (Sulfolobus solfataricus).